A 189-amino-acid polypeptide reads, in one-letter code: Interferon alpha-1 (189 aa).

The signal sequence occupies residues 1-23; the sequence is MAPAWSLLLALLLLSCNAICSLG. Intrachain disulfides connect Cys24–Cys122 and Cys52–Cys162.

It belongs to the alpha/beta interferon family. Interacts with CR2.

It is found in the secreted. Its function is as follows. Produced by macrophages, IFN-alpha have antiviral activities. Interferon stimulates the production of two enzymes: a protein kinase and an oligoadenylate synthetase. The chain is Interferon alpha-1 from Bos taurus (Bovine).